The primary structure comprises 175 residues: NADH-ubiquinone oxidoreductase chain 6 (175 aa).

Helical transmembrane passes span 1-21, 25-45, 47-67, 88-108, and 149-169; these read MMLY…VGFS, SPIY…GIVL, FGGS…MMVV, AVLG…YYVL, and YGTW…VVIM.

This sequence belongs to the complex I subunit 6 family. In terms of assembly, core subunit of respiratory chain NADH dehydrogenase (Complex I) which is composed of 45 different subunits.

It is found in the mitochondrion inner membrane. It carries out the reaction a ubiquinone + NADH + 5 H(+)(in) = a ubiquinol + NAD(+) + 4 H(+)(out). Functionally, core subunit of the mitochondrial membrane respiratory chain NADH dehydrogenase (Complex I) which catalyzes electron transfer from NADH through the respiratory chain, using ubiquinone as an electron acceptor. Essential for the catalytic activity and assembly of complex I. The protein is NADH-ubiquinone oxidoreductase chain 6 (MT-ND6) of Bos indicus (Zebu).